An 843-amino-acid polypeptide reads, in one-letter code: MRERKETAMSDKEKKGAGAGAQVAPAMGPPVLINKEDIPAVLPILPLRNSVFFPGGVLPLAVGRQKTIALIKDAVRDEQVIGVVTQRRAEEEDPGAADLYTVGTVARVVKLLKMGEDNYSLVVQGLARFKVLELVQESPYLKARIEAVEDRSVVDDVEVEALAINLKKLAREVIELMPELPAAATELVESITHPGHLADLIAANVDVPIEEKQQVLETVELKARMKLVLELLNRKREILKLSNKIDSAVKGEMSKTQREYYLRQQLKAIKEELGELGEEEEELDELQERLKKAGLPPEVEKVAQKELNRLKSIPTASSEYTVARTYLDWIADLPWTKRTDDNLDIENARQILDTDHYGLDKIKKRILEYLAVRKLKNDMRGPILCFVGPPGVGKTSLGQSIARATGRKFVRLSLGGVRDEAEIRGHRRTYVGALPGRIIQSMKKAATVNPVMMLDEIDKLGADFRGDPSAALLEVLDPEQNHAFSDHYLDLSYDLSKVMFIGTANLLDPIPGPLKDRMEILELPGYTFEEKVHIAQNHLIPKQLREHGLSADAIAISEKALIKIIMAYTREAGVRNLERRIADVCRAIAVEVASGKIGASAKRSIEEADVLEILGPEKFYNETAERTEIAGVATGLAWTAAGGDILFIEATKMPGKGALTLTGQLGDVMKESAQAALSYLRSKSDSLGIPVNFLEKTDLHIHFPAGAIPKDGPSAGVTILTALVSLLTGIRVRSDVAMTGEVTLRGLVLPVGGIKEKVLAAHRAGIKRIIIPARNEKDLLDVPEQARKELEFVFAAHMDEVLQAALEENPVGRKPPAAPEPEGEKKPGATPTPPAKKPDEIRV.

Residues 1 to 16 are compositionally biased toward basic and acidic residues; sequence MRERKETAMSDKEKKG. A disordered region spans residues 1-22; the sequence is MRERKETAMSDKEKKGAGAGAQ. The Lon N-terminal domain occupies 42–236; that stretch reads LPILPLRNSV…LVLELLNRKR (195 aa). An ATP-binding site is contributed by 388-395; that stretch reads GPPGVGKT. Residues 627–808 enclose the Lon proteolytic domain; the sequence is TEIAGVATGL…DEVLQAALEE (182 aa). Catalysis depends on residues Ser-714 and Lys-757. The tract at residues 805-843 is disordered; sequence ALEENPVGRKPPAAPEPEGEKKPGATPTPPAKKPDEIRV.

The protein belongs to the peptidase S16 family. Homohexamer. Organized in a ring with a central cavity.

It is found in the cytoplasm. It carries out the reaction Hydrolysis of proteins in presence of ATP.. In terms of biological role, ATP-dependent serine protease that mediates the selective degradation of mutant and abnormal proteins as well as certain short-lived regulatory proteins. Required for cellular homeostasis and for survival from DNA damage and developmental changes induced by stress. Degrades polypeptides processively to yield small peptide fragments that are 5 to 10 amino acids long. Binds to DNA in a double-stranded, site-specific manner. The sequence is that of Lon protease from Anaeromyxobacter dehalogenans (strain 2CP-C).